The sequence spans 550 residues: MTPADLAELLRGTAASVLADRGLDVSVLPETLTVERPRNPEHGDYATNIAMQVAKKVGTNPRELAGWIAEALTAADGIESAEIAGPGFLNIRLDKDAQGAIVVSVLEAGSSYGSGDSLAGKKINLEFVSANPTGPIHLGGTRWAAVGDALGRILSAQGGLVTREYYFNDHGAQIDRFSRSLIAAAKGEPAPEDGYAGAYIADIAASVLKQRPDVMELPADEQQETFRAIGVELMFTHIKQTLHDFGVDFDVYFHENSLFESGAVEKAVESLKGSGNLFHEDGAWWLKSTDYGDDKDRVVIKSDGNAAYIAGDIAYFQNKRARGFDLCIYMLGADHHGYIGRLKAAAAAFGDDPDTVEVLIGQMVNLVKDGTAVKMSKRAGTVITLDDLVEAIGVDASRYVMIRSSVDSSIDIDLDLWTKTSSENPVYYVQYAHARLSAIARNAADLGLSADASNLALLTVEQEGDLIRTIGEYPRVVSSAANLREPHRIARYLEELAGAYHRFYGACRILPQGDEDATDVHRARLALCAATRQVLANGLELLGVTAPEQM.

A 'HIGH' region motif is present at residues 130–140; that stretch reads ANPTGPIHLGG.

Belongs to the class-I aminoacyl-tRNA synthetase family. Monomer.

It is found in the cytoplasm. The enzyme catalyses tRNA(Arg) + L-arginine + ATP = L-arginyl-tRNA(Arg) + AMP + diphosphate. The polypeptide is Arginine--tRNA ligase (Rhodococcus erythropolis (strain PR4 / NBRC 100887)).